The following is a 266-amino-acid chain: Thymidylate synthase (266 aa).

A dUMP-binding site is contributed by arginine 24. Histidine 54 is a binding site for (6R)-5,10-methylene-5,6,7,8-tetrahydrofolate. Arginine 129–arginine 130 lines the dUMP pocket. Cysteine 149 serves as the catalytic Nucleophile. DUMP-binding positions include arginine 169–aspartate 172, asparagine 180, and histidine 210–tyrosine 212. Aspartate 172 is a (6R)-5,10-methylene-5,6,7,8-tetrahydrofolate binding site. (6R)-5,10-methylene-5,6,7,8-tetrahydrofolate is bound at residue alanine 265.

This sequence belongs to the thymidylate synthase family. Bacterial-type ThyA subfamily. Homodimer.

It localises to the cytoplasm. The catalysed reaction is dUMP + (6R)-5,10-methylene-5,6,7,8-tetrahydrofolate = 7,8-dihydrofolate + dTMP. It functions in the pathway pyrimidine metabolism; dTTP biosynthesis. Catalyzes the reductive methylation of 2'-deoxyuridine-5'-monophosphate (dUMP) to 2'-deoxythymidine-5'-monophosphate (dTMP) while utilizing 5,10-methylenetetrahydrofolate (mTHF) as the methyl donor and reductant in the reaction, yielding dihydrofolate (DHF) as a by-product. This enzymatic reaction provides an intracellular de novo source of dTMP, an essential precursor for DNA biosynthesis. The polypeptide is Thymidylate synthase (Mycobacterium sp. (strain KMS)).